We begin with the raw amino-acid sequence, 313 residues long: Porphobilinogen deaminase (313 aa).

Position 242 is an S-(dipyrrolylmethanemethyl)cysteine (cysteine 242).

It belongs to the HMBS family. Monomer. Requires dipyrromethane as cofactor.

It carries out the reaction 4 porphobilinogen + H2O = hydroxymethylbilane + 4 NH4(+). It participates in porphyrin-containing compound metabolism; protoporphyrin-IX biosynthesis; coproporphyrinogen-III from 5-aminolevulinate: step 2/4. Tetrapolymerization of the monopyrrole PBG into the hydroxymethylbilane pre-uroporphyrinogen in several discrete steps. The protein is Porphobilinogen deaminase of Yersinia pseudotuberculosis serotype O:3 (strain YPIII).